Here is a 498-residue protein sequence, read N- to C-terminus: ATP synthase subunit beta, chloroplastic (498 aa).

172–179 provides a ligand contact to ATP; the sequence is GGAGVGKT.

Belongs to the ATPase alpha/beta chains family. As to quaternary structure, F-type ATPases have 2 components, CF(1) - the catalytic core - and CF(0) - the membrane proton channel. CF(1) has five subunits: alpha(3), beta(3), gamma(1), delta(1), epsilon(1). CF(0) has four main subunits: a(1), b(1), b'(1) and c(9-12).

It localises to the plastid. Its subcellular location is the chloroplast thylakoid membrane. The enzyme catalyses ATP + H2O + 4 H(+)(in) = ADP + phosphate + 5 H(+)(out). Functionally, produces ATP from ADP in the presence of a proton gradient across the membrane. The catalytic sites are hosted primarily by the beta subunits. This Beta vulgaris (Sugar beet) protein is ATP synthase subunit beta, chloroplastic.